The sequence spans 1342 residues: ATP-dependent RNA helicase TDRD9 (1342 aa).

Residues 31-63 (KAEAEDNATEVRSDKAFSELSSPEKEKSDDGNQ) show a composition bias toward basic and acidic residues. The interval 31-81 (KAEAEDNATEVRSDKAFSELSSPEKEKSDDGNQRRKRAQLPTGPGTSPPSL) is disordered. A Helicase ATP-binding domain is found at 99–265 (VSLIENNSVV…FGSPIRNQMN (167 aa)). ATP is bound at residue 112 to 119 (GATGSGKT). A DEAH box motif is present at residues 211 to 214 (DEVH). Residues 317–503 (SLIQSFDEME…LLKVKLLDMG (187 aa)) enclose the Helicase C-terminal domain. The Tudor domain maps to 901-962 (SLYPNLLCVA…RELPSDLMTP (62 aa)).

It belongs to the DEAD box helicase family. DEAH subfamily.

It is found in the cytoplasm. The protein localises to the nucleus. The enzyme catalyses ATP + H2O = ADP + phosphate + H(+). Its function is as follows. ATP-binding RNA helicase which plays a central role during spermatogenesis by repressing transposable elements and preventing their mobilization, which is essential for the germline integrity. Acts via the piRNA metabolic process, which mediates the repression of transposable elements during meiosis by forming complexes composed of piRNAs and Piwi proteins and governs the methylation and subsequent repression of transposons. Acts downstream of piRNA biogenesis: exclusively required for transposon silencing in the nucleus, suggesting that it acts as a nuclear effector in the nucleus together with piwil4. The protein is ATP-dependent RNA helicase TDRD9 of Danio rerio (Zebrafish).